Consider the following 267-residue polypeptide: Imidazole glycerol phosphate synthase subunit HisF (267 aa).

Active-site residues include Asp-21 and Asp-140.

The protein belongs to the HisA/HisF family. In terms of assembly, heterodimer of HisH and HisF.

It is found in the cytoplasm. The enzyme catalyses 5-[(5-phospho-1-deoxy-D-ribulos-1-ylimino)methylamino]-1-(5-phospho-beta-D-ribosyl)imidazole-4-carboxamide + L-glutamine = D-erythro-1-(imidazol-4-yl)glycerol 3-phosphate + 5-amino-1-(5-phospho-beta-D-ribosyl)imidazole-4-carboxamide + L-glutamate + H(+). It functions in the pathway amino-acid biosynthesis; L-histidine biosynthesis; L-histidine from 5-phospho-alpha-D-ribose 1-diphosphate: step 5/9. Functionally, IGPS catalyzes the conversion of PRFAR and glutamine to IGP, AICAR and glutamate. The HisF subunit catalyzes the cyclization activity that produces IGP and AICAR from PRFAR using the ammonia provided by the HisH subunit. The polypeptide is Imidazole glycerol phosphate synthase subunit HisF (Bordetella avium (strain 197N)).